The following is a 37-amino-acid chain: Large ribosomal subunit protein bL36c (37 aa).

The protein belongs to the bacterial ribosomal protein bL36 family.

Its subcellular location is the plastid. It is found in the chloroplast. This chain is Large ribosomal subunit protein bL36c, found in Lotus japonicus (Lotus corniculatus var. japonicus).